A 331-amino-acid chain; its full sequence is MTHIPKTPADTETLLSEVQGWKHRHVLDLDNFSREELDMVMQTAGVMLDILSRPVKKVPALKGKTIATLFYEPSTRTRSSFELAAKSLSADVLNLNVSQSSISKGESLLDTLDTLESLGADMVVMRHPLSGAPYLAANNCHANIINAGDGWHAHPSQALLDIFTILRHKSSLEGLKITLIGDIKHSRVAHSNIWGLSKMGAKITLCAPYTLLPEGLNTNSKIFPEVTLETDIKQAVSGADVVMGLRLQRERQQSGLLPGIREYARYFQLNEEILKLAKSNALVMHPGPVNEDIELSQSVVHGEQSVIKEQVKNGVAVRMALFYLCSGSKEI.

Carbamoyl phosphate is bound by residues Arg76 and Thr77. Lys104 lines the L-aspartate pocket. Arg126, His154, and Gln157 together coordinate carbamoyl phosphate. Positions 187 and 246 each coordinate L-aspartate. Carbamoyl phosphate-binding residues include Gly287 and Pro288.

It belongs to the aspartate/ornithine carbamoyltransferase superfamily. ATCase family. In terms of assembly, heterododecamer (2C3:3R2) of six catalytic PyrB chains organized as two trimers (C3), and six regulatory PyrI chains organized as three dimers (R2).

It catalyses the reaction carbamoyl phosphate + L-aspartate = N-carbamoyl-L-aspartate + phosphate + H(+). It participates in pyrimidine metabolism; UMP biosynthesis via de novo pathway; (S)-dihydroorotate from bicarbonate: step 2/3. In terms of biological role, catalyzes the condensation of carbamoyl phosphate and aspartate to form carbamoyl aspartate and inorganic phosphate, the committed step in the de novo pyrimidine nucleotide biosynthesis pathway. The polypeptide is Aspartate carbamoyltransferase catalytic subunit (Dehalococcoides mccartyi (strain ATCC BAA-2100 / JCM 16839 / KCTC 5957 / BAV1)).